We begin with the raw amino-acid sequence, 82 residues long: Large ribosomal subunit protein bL31B (82 aa).

It belongs to the bacterial ribosomal protein bL31 family. Type B subfamily. Part of the 50S ribosomal subunit.

This is Large ribosomal subunit protein bL31B from Dichelobacter nodosus (strain VCS1703A).